The following is a 546-amino-acid chain: Choline/ethanolamine transporter FLVCR2 (546 aa).

Residues 1 to 84 (MVNESLNQEE…TLAQPSGLTH (84 aa)) form a disordered region. Over 1 to 93 (MVNESLNQEE…HPNELVKEDS (93 aa)) the chain is Cytoplasmic. The span at 22–49 (QADTSYSTQPSVSIHPSVSGHPSVSIHP) shows a compositional bias: polar residues. Repeat copies occupy residues 31–36 (PSVSIH), 37–42 (PSVSGH), 43–48 (PSVSIH), 49–54 (PSVSGH), 55–60 (PSVSID), 61–66 (PSVSVH), and 67–72 (PSSSAH). Residues 31–84 (PSVSIHPSVSGHPSVSIHPSVSGHPSVSIDPSVSVHPSSSAHPSTLAQPSGLTH) are 9 X 6 AA tandem repeats of P-S-[VS]-S-[VIAG]-[HD]. The segment covering 54–74 (HPSVSIDPSVSVHPSSSAHPS) has biased composition (low complexity). Residues 73–78 (PSTLAQ) form an 8; approximate repeat. A 9; approximate repeat occupies 79 to 84 (PSGLTH). A helical transmembrane segment spans residues 94-118 (VIKVSKRRWAVVLVFSCYSLCNAFQ). Residues N115, A116, and W119 each coordinate choline. The Extracellular portion of the chain corresponds to 119-136 (WIQYGSINNIFMNFYGVS). Residues 137-164 (AFAIDWLSMCYMLTYIPLLLPVAWMLEK) traverse the membrane as a helical segment. The Cytoplasmic portion of the chain corresponds to 165–166 (FG). Residues 167–186 (LRTIAITGSALNCLGAWVKL) traverse the membrane as a helical segment. The Extracellular portion of the chain corresponds to 187–193 (GSLEPHL). Residues 194 to 222 (FPVTMVGQVICSVAQVFILGMPSRIASVW) form a helical membrane-spanning segment. L212 lines the choline pocket. Topologically, residues 223–227 (FGANE) are cytoplasmic. The chain crosses the membrane as a helical span at residues 228 to 253 (VSTACSMAVFGNQLGIAIGFLVPPVL). Over 254-258 (VPNIK) the chain is Extracellular. Residues 259-288 (DQEKLAYHISIMFYIIGGVATLLFILVIIV) traverse the membrane as a helical segment. Topologically, residues 289-324 (FKEKPKYPPSRAQSLSYALATTDASYLSSIVRLFKN) are cytoplasmic. The chain crosses the membrane as a helical span at residues 325–355 (LNFVLLVITYGLNAGAFYALSTLLNRMVIMH). Y342 provides a ligand contact to choline. At 356–359 (FPGQ) the chain is on the extracellular side. Residues 360–388 (EVNAGRIGLTIVIAGMFGAMISGIWLDKS) form a helical membrane-spanning segment. The Cytoplasmic portion of the chain corresponds to 389 to 390 (KT). Residues 391–413 (YKETTLVVYIMTLVGMVVYTFTL) traverse the membrane as a helical segment. Over 414-416 (NLN) the chain is Extracellular. Residues 417–446 (HLWIVFITADSLGFFMTGYLPLGFEFAVEL) traverse the membrane as a helical segment. Topologically, residues 447–454 (TYPESEGV) are cytoplasmic. The chain crosses the membrane as a helical span at residues 455 to 480 (SSGLLNVSAQVFGIIFTISQGQIIDN). Q464 lines the choline pocket. The Extracellular portion of the chain corresponds to 481–482 (YG). The helical transmembrane segment at 483-505 (SVPGNIFLCVFLALGSALTAFIK) threads the bilayer. Topologically, residues 506–546 (SDLRRQRANKDAPETKVQEEEEEEEESNTSKVPTVLSEAHL) are cytoplasmic. The span at 511–523 (QRANKDAPETKVQ) shows a compositional bias: basic and acidic residues. Residues 511-546 (QRANKDAPETKVQEEEEEEEESNTSKVPTVLSEAHL) are disordered. Phosphoserine is present on S535.

The protein belongs to the major facilitator superfamily. Feline leukemia virus subgroup C receptor (TC 2.A.1.28.1) family. Interacts with components of electron transfer chain complexes III, IV and V including CYC1, NDUFA4, COX4I1, ATP5PD and ATP5F1C; these interactions occur in the absence of heme and are disrupted upon heme binding. Interacts with ATP2A2; this interaction occurs in the absence of heme and promotes ATP2A2 proteasomal degradation; the complex is dissociated upon heme binding. Interacts with HMOX1; this interaction is potentiated in the presence of heme.

The protein localises to the cell membrane. Its subcellular location is the mitochondrion membrane. It is found in the endoplasmic reticulum membrane. The catalysed reaction is choline(out) = choline(in). It carries out the reaction ethanolamine(in) = ethanolamine(out). The enzyme catalyses heme b(in) = heme b(out). Functionally, choline uniporter that specifically mediates choline uptake at the blood-brain-barrier. Responsible for the majority of choline uptake across the blood-brain-barrier from the circulation into the brain. Choline, a nutrient critical for brain development, is a precursor of phosphatidylcholine, as well as betaine. Also mediates transport of ethanolamine. Choline and ethanolamine transport is not coupled with proton transport and is exclusively driven by the choline gradient across the plasma membrane. However, the presence of an inwardly directed proton gradient enhances choline uptake. Also acts as a heme b transporter. Required to regulate mitochondrial respiration processes, ATP synthesis and thermogenesis. At low heme levels, interacts with components of electron transfer chain (ETC) complexes and ATP2A2, leading to ubiquitin-mediated degradation of ATP2A2 and inhibition of thermogenesis. Upon heme binding, dissociates from ETC complexes to allow switching from mitochondrial ATP synthesis to thermogenesis. This chain is Choline/ethanolamine transporter FLVCR2 (Flvcr2), found in Rattus norvegicus (Rat).